We begin with the raw amino-acid sequence, 187 residues long: Structural protein ORF187 (187 aa).

The helical transmembrane segment at 65–85 threads the bilayer; sequence IYQPTAIAVSGVGGIIGALLA.

It localises to the host membrane. The protein resides in the virion. The chain is Structural protein ORF187 from Acidianus two-tailed virus (ATV).